The chain runs to 148 residues: Natriuretic peptide BF131 (148 aa).

The N-terminal stretch at 1-27 is a signal peptide; the sequence is MVGPSRLAGGGLLLLLLLALLPLALDG. Residues 28 to 83 constitute a propeptide that is removed on maturation; it reads KPAPPPQALPKDPAAASAAERIMRALLPDSKSSRPATDRMVHPEHQAGGGDTRRLQ. 2 disordered regions span residues 54–83 and 105–127; these read LPDS…RRLQ and TSDM…PSAA. The span at 63 to 83 shows a compositional bias: basic and acidic residues; it reads ATDRMVHPEHQAGGGDTRRLQ. An intrachain disulfide couples cysteine 94 to cysteine 110. The propeptide occupies 130–148; that stretch reads AVTWLIRDLRADSKQSRAA.

It belongs to the natriuretic peptide family. Expressed by the venom gland.

Its subcellular location is the secreted. In terms of biological role, natriuretic peptide that dose-dependently induces the rapid relaxation of rat aortic strips phenylephrine-precontracted. Acts by stimulating cGMP production in a dose-dependent manner (by probably activating NPR1 and/or NPR2). May also show potent hypotensive effects. This chain is Natriuretic peptide BF131, found in Bungarus flaviceps flaviceps (Red-headed krait).